A 167-amino-acid chain; its full sequence is ATP synthase subunit delta, mitochondrial (167 aa).

A mitochondrion-targeting transit peptide spans M1–Y28.

It belongs to the ATPase epsilon chain family. As to quaternary structure, F-type ATPases have 2 components, CF(1) - the catalytic core - and CF(0) - the membrane proton channel. CF(1) has five subunits: alpha(3), beta(3), gamma(1), delta(1), epsilon(1). CF(0) has three main subunits: a, b and c.

It is found in the mitochondrion. The protein localises to the mitochondrion inner membrane. Mitochondrial membrane ATP synthase (F(1)F(0) ATP synthase or Complex V) produces ATP from ADP in the presence of a proton gradient across the membrane which is generated by electron transport complexes of the respiratory chain. F-type ATPases consist of two structural domains, F(1) - containing the extramembraneous catalytic core, and F(0) - containing the membrane proton channel, linked together by a central stalk and a peripheral stalk. During catalysis, ATP turnover in the catalytic domain of F(1) is coupled via a rotary mechanism of the central stalk subunits to proton translocation. Part of the complex F(1) domain and of the central stalk which is part of the complex rotary element. Rotation of the central stalk against the surrounding alpha(3)beta(3) subunits leads to hydrolysis of ATP in three separate catalytic sites on the beta subunits. The polypeptide is ATP synthase subunit delta, mitochondrial (atp16) (Schizosaccharomyces pombe (strain 972 / ATCC 24843) (Fission yeast)).